We begin with the raw amino-acid sequence, 496 residues long: Putative zinc finger CCCH domain-containing protein 48 (496 aa).

Disordered stretches follow at residues 1-77 (MADS…QPVH) and 108-194 (MGAG…HPDD). Acidic residues predominate over residues 143–156 (HLAEEEEEEEEEHY). 3 consecutive C3H1-type zinc fingers follow at residues 377–406 (EHKTKLCAEYYSRGLGCPRGNTCKYAHGED), 439–467 (KYKTKLCKTFTSGGLCLFAANCRFAHGEV), and 469–496 (LGKKEPCWYFFSGQTCPRGDTCGFRHSY).

The polypeptide is Putative zinc finger CCCH domain-containing protein 48 (Oryza sativa subsp. japonica (Rice)).